We begin with the raw amino-acid sequence, 172 residues long: Translation initiation factor IF-3 (172 aa).

This sequence belongs to the IF-3 family. As to quaternary structure, monomer.

It localises to the cytoplasm. IF-3 binds to the 30S ribosomal subunit and shifts the equilibrium between 70S ribosomes and their 50S and 30S subunits in favor of the free subunits, thus enhancing the availability of 30S subunits on which protein synthesis initiation begins. The chain is Translation initiation factor IF-3 from Sulfurimonas denitrificans (strain ATCC 33889 / DSM 1251) (Thiomicrospira denitrificans (strain ATCC 33889 / DSM 1251)).